Reading from the N-terminus, the 265-residue chain is 4-hydroxy-tetrahydrodipicolinate reductase (265 aa).

NAD(+)-binding positions include 7–12 (GASGRM), Asp-33, 96–98 (GTT), and 120–123 (AANF). His-153 acts as the Proton donor/acceptor in catalysis. His-154 provides a ligand contact to (S)-2,3,4,5-tetrahydrodipicolinate. Residue Lys-157 is the Proton donor of the active site. Position 163-164 (163-164 (GT)) interacts with (S)-2,3,4,5-tetrahydrodipicolinate.

It belongs to the DapB family.

Its subcellular location is the cytoplasm. The catalysed reaction is (S)-2,3,4,5-tetrahydrodipicolinate + NAD(+) + H2O = (2S,4S)-4-hydroxy-2,3,4,5-tetrahydrodipicolinate + NADH + H(+). It catalyses the reaction (S)-2,3,4,5-tetrahydrodipicolinate + NADP(+) + H2O = (2S,4S)-4-hydroxy-2,3,4,5-tetrahydrodipicolinate + NADPH + H(+). It participates in amino-acid biosynthesis; L-lysine biosynthesis via DAP pathway; (S)-tetrahydrodipicolinate from L-aspartate: step 4/4. Functionally, catalyzes the conversion of 4-hydroxy-tetrahydrodipicolinate (HTPA) to tetrahydrodipicolinate. This chain is 4-hydroxy-tetrahydrodipicolinate reductase, found in Cupriavidus necator (strain ATCC 17699 / DSM 428 / KCTC 22496 / NCIMB 10442 / H16 / Stanier 337) (Ralstonia eutropha).